A 147-amino-acid chain; its full sequence is Flagellar assembly factor FliW (147 aa).

It belongs to the FliW family. Interacts with translational regulator CsrA and flagellin(s).

The protein resides in the cytoplasm. In terms of biological role, acts as an anti-CsrA protein, binds CsrA and prevents it from repressing translation of its target genes, one of which is flagellin. Binds to flagellin and participates in the assembly of the flagellum. This chain is Flagellar assembly factor FliW, found in Oceanobacillus iheyensis (strain DSM 14371 / CIP 107618 / JCM 11309 / KCTC 3954 / HTE831).